The primary structure comprises 227 residues: Ion-translocating oxidoreductase complex subunit E (227 aa).

5 helical membrane passes run 57–77, 89–109, 111–131, 146–166, and 200–220; these read LGLG…ISLF, IYVM…NAFA, PVYQ…IVIG, AFDG…LGAI, and GLLL…ILAV.

The protein belongs to the NqrDE/RnfAE family. As to quaternary structure, the complex is composed of six subunits: RnfA, RnfB, RnfC, RnfD, RnfE and RnfG.

It localises to the cell inner membrane. In terms of biological role, part of a membrane-bound complex that couples electron transfer with translocation of ions across the membrane. This Haemophilus ducreyi (strain 35000HP / ATCC 700724) protein is Ion-translocating oxidoreductase complex subunit E.